A 348-amino-acid chain; its full sequence is Dihydroorotase (348 aa).

Positions 14 and 16 each coordinate Zn(2+). Substrate is bound by residues 16 to 18 (HLR) and Asn42. Zn(2+) contacts are provided by Lys100, His137, and His175. Lys100 carries the post-translational modification N6-carboxylysine. His137 is a substrate binding site. Leu220 is a binding site for substrate. Position 248 (Asp248) interacts with Zn(2+). Asp248 is a catalytic residue. His252 and Ala264 together coordinate substrate.

Belongs to the metallo-dependent hydrolases superfamily. DHOase family. Class II DHOase subfamily. In terms of assembly, homodimer. The cofactor is Zn(2+).

The enzyme catalyses (S)-dihydroorotate + H2O = N-carbamoyl-L-aspartate + H(+). Its pathway is pyrimidine metabolism; UMP biosynthesis via de novo pathway; (S)-dihydroorotate from bicarbonate: step 3/3. In terms of biological role, catalyzes the reversible cyclization of carbamoyl aspartate to dihydroorotate. This Pseudomonas fluorescens (strain Pf0-1) protein is Dihydroorotase.